Consider the following 304-residue polypeptide: Acetylglutamate kinase (304 aa).

Substrate contacts are provided by residues 77–78 (GG), Arg-99, and Asn-201.

Belongs to the acetylglutamate kinase family. ArgB subfamily.

The protein resides in the cytoplasm. The catalysed reaction is N-acetyl-L-glutamate + ATP = N-acetyl-L-glutamyl 5-phosphate + ADP. It functions in the pathway amino-acid biosynthesis; L-arginine biosynthesis; N(2)-acetyl-L-ornithine from L-glutamate: step 2/4. Catalyzes the ATP-dependent phosphorylation of N-acetyl-L-glutamate. This chain is Acetylglutamate kinase, found in Methylibium petroleiphilum (strain ATCC BAA-1232 / LMG 22953 / PM1).